The chain runs to 629 residues: Endoglucanase 15 (629 aa).

Residues 1 to 30 form the signal peptide; sequence MAKNGGAHGAATLFGLLALASMVKLGFVAG. The Nucleophile role is filled by Asp-87. Residues His-421, Asp-473, and Glu-482 contribute to the active site. N-linked (GlcNAc...) asparagine glycosylation is found at Asn-520, Asn-540, and Asn-561.

Belongs to the glycosyl hydrolase 9 (cellulase E) family.

It is found in the secreted. It catalyses the reaction Endohydrolysis of (1-&gt;4)-beta-D-glucosidic linkages in cellulose, lichenin and cereal beta-D-glucans.. This chain is Endoglucanase 15, found in Oryza sativa subsp. japonica (Rice).